Consider the following 583-residue polypeptide: Torsin-1A-interacting protein 1 (583 aa).

Positions 1–12 are enriched in basic and acidic residues; the sequence is MAGDGRRAEAVR. 2 disordered regions span residues 1 to 254 and 271 to 293; these read MAGD…RSSS and AHDKQPSVLSSGYQKTPQEWAPQ. Residues 1–338 are Nuclear-facing; that stretch reads MAGDGRRAEA…NASFVKRNRW (338 aa). Residue serine 60 is modified to Phosphoserine. Composition is skewed to basic and acidic residues over residues 74–101 and 115–124; these read VAKERSPVGKRTRLEEFRSDSAKEEVRE and RPQETEEMKT. Phosphoserine occurs at positions 135 and 143. Methionine 146 is subject to Methionine sulfoxide. Phosphoserine is present on residues serine 154, serine 156, and serine 157. The segment covering 165–174 has biased composition (polar residues); sequence QTDLSQTISK. Phosphoserine occurs at positions 186 and 215. The span at 216–225 shows a compositional bias: acidic residues; the sequence is EEGETEEDDQ. Position 220 is a phosphothreonine (threonine 220). Phosphoserine occurs at positions 227, 230, and 242. The segment covering 238-250 has biased composition (basic and acidic residues); sequence RSRDSDESGDKTT. A compositionally biased stretch (polar residues) spans 277–287; that stretch reads SVLSSGYQKTP. Methionine sulfoxide is present on methionine 301. Serine 305 is modified (phosphoserine). Lysine 308 is covalently cross-linked (Glycyl lysine isopeptide (Lys-Gly) (interchain with G-Cter in SUMO2)). Serine 309 and serine 315 each carry phosphoserine. Residues 309-328 are disordered; the sequence is SELGNQSPSTSSRQVTGQPQ. Residues 339–355 traverse the membrane as a helical segment; sequence WLLPLIAALASGSFWFF. Residues 356–583 lie on the Perinuclear space side of the membrane; the sequence is STPEVETTAV…ENALKRGICL (228 aa). Residues 356-583 are interaction with TOR1A; sequence STPEVETTAV…ENALKRGICL (228 aa). A coiled-coil region spans residues 359 to 435; sequence EVETTAVQEF…SEQIADAYSS (77 aa). An N-linked (GlcNAc...) asparagine glycan is attached at asparagine 399. At methionine 552 the chain carries Methionine sulfoxide.

The protein belongs to the TOR1AIP family. Interacts with ATP1B4. Interacts with TOR1A (ATP-bound). Interacts with TOR1B, TOR2A and TOR3A. Interacts with VIM. In terms of processing, phosphorylated. Dephosphorylated at Ser-309 and Ser-315 by serine/threonine-protein phosphatase PP1. As to expression, expressed in muscle, liver and kidney. In terms of tissue distribution, major isoform present in liver, brain and heart (at protein level). Expressed at lower levels than isoform 4 in lung, kidney and spleen (at protein level). Similar levels of isoforms 1 and 4 are observed in ovary, testis and pancreas (at protein level). Expressed at higher levels than isoform 1 in lung, kidney and spleen (at protein level). Expressed at lower levels than isoform 1 in liver, brain and heart (at protein level). Similar levels of isoforms 1 and 4 are observed in ovary, testis and pancreas (at protein level).

The protein resides in the nucleus inner membrane. The protein localises to the nucleus envelope. Its subcellular location is the nucleus. Functionally, required for nuclear membrane integrity. Induces TOR1A and TOR1B ATPase activity and is required for their location on the nuclear membrane. Binds to A- and B-type lamins. Possible role in membrane attachment and assembly of the nuclear lamina. This Homo sapiens (Human) protein is Torsin-1A-interacting protein 1 (TOR1AIP1).